Consider the following 173-residue polypeptide: 6,7-dimethyl-8-ribityllumazine synthase (173 aa).

5-amino-6-(D-ribitylamino)uracil-binding positions include Phe24, Ala58 to Glu60, and Ala82 to Ile84. Glu87–Thr88 contacts (2S)-2-hydroxy-3-oxobutyl phosphate. His90 functions as the Proton donor in the catalytic mechanism. Asn115 serves as a coordination point for 5-amino-6-(D-ribitylamino)uracil. Arg129 serves as a coordination point for (2S)-2-hydroxy-3-oxobutyl phosphate. Residues Thr150–Ala173 are disordered. Residues Leu154–Ala173 show a composition bias toward acidic residues.

The protein belongs to the DMRL synthase family.

It carries out the reaction (2S)-2-hydroxy-3-oxobutyl phosphate + 5-amino-6-(D-ribitylamino)uracil = 6,7-dimethyl-8-(1-D-ribityl)lumazine + phosphate + 2 H2O + H(+). Its pathway is cofactor biosynthesis; riboflavin biosynthesis; riboflavin from 2-hydroxy-3-oxobutyl phosphate and 5-amino-6-(D-ribitylamino)uracil: step 1/2. Functionally, catalyzes the formation of 6,7-dimethyl-8-ribityllumazine by condensation of 5-amino-6-(D-ribitylamino)uracil with 3,4-dihydroxy-2-butanone 4-phosphate. This is the penultimate step in the biosynthesis of riboflavin. This is 6,7-dimethyl-8-ribityllumazine synthase from Burkholderia mallei (strain NCTC 10247).